Consider the following 859-residue polypeptide: DNA mismatch repair protein MutS (859 aa).

615–622 is a binding site for ATP; the sequence is GPNMGGKS.

The protein belongs to the DNA mismatch repair MutS family.

Functionally, this protein is involved in the repair of mismatches in DNA. It is possible that it carries out the mismatch recognition step. This protein has a weak ATPase activity. The protein is DNA mismatch repair protein MutS of Chromohalobacter salexigens (strain ATCC BAA-138 / DSM 3043 / CIP 106854 / NCIMB 13768 / 1H11).